The following is a 652-amino-acid chain: MSTAPSPGTTPSPSPPSPPTNSTTTTPPPAASSPPPTTTPSSPPPSPSTNSTSPPPSSPLPPSLPPPSPPGSLTPPLPQPSPSAPITPSPPSPTTPSNPRSPPSPNQGPPNTPSGSTPRTPSNTKPSPPSDSSDGLSTGVVVGIAIGGVAILVILTLICLLCKKKRRRRHDDEAAYYVPPPPPSGPKAGGPYGGQQQYWQQQNASRPSDNHVVTSLPPPKPPSPPRKPPPPPPPPAFMSSSGGSDYSDLPVLPPPSPGLVLGFSKSTFTYEELSRATNGFSEANLLGQGGFGYVHKGILPSGKEVAVKQLKAGSGQGEREFQAEVEIISRVHHRHLVSLIGYCMAGVQRLLVYEFVPNNNLEFHLHGKGRPTMEWSTRLKIALGSAKGLSYLHEDCNPKIIHRDIKASNILIDFKFEAKVADFGLAKIASDTNTHVSTRVMGTFGYLAPEYAASGKLTEKSDVFSFGVVLLELITGRRPVDANNVYVDDSLVDWARPLLNRASEEGDFEGLADSKMGNEYDREEMARMVACAAACVRHSARRRPRMSQIVRALEGNVSLSDLNEGMRPGHSNVYSSYGGSTDYDTSQYNDDMIKFRKMALGTQEYGTTGEYSNPTSDYGLYPSGSSSEGQATREMEMGKIKKTGQGYSGPSL.

Positions 1 to 137 (MSTAPSPGTT…PPSDSSDGLS (137 aa)) are disordered. At 1-139 (MSTAPSPGTT…SDSSDGLSTG (139 aa)) the chain is on the extracellular side. The segment covering 8–19 (GTTPSPSPPSPP) has biased composition (pro residues). Residues asparagine 21 and asparagine 50 are each glycosylated (N-linked (GlcNAc...) asparagine). A compositionally biased stretch (pro residues) spans 26-112 (TPPPAASSPP…PSPNQGPPNT (87 aa)). Positions 113–137 (PSGSTPRTPSNTKPSPPSDSSDGLS) are enriched in low complexity. Residues 140-160 (VVVGIAIGGVAILVILTLICL) traverse the membrane as a helical segment. Residues 161–652 (LCKKKRRRRH…TGQGYSGPSL (492 aa)) lie on the Cytoplasmic side of the membrane. The tract at residues 169–251 (RHDDEAAYYV…GGSDYSDLPV (83 aa)) is disordered. Positions 203 to 213 (NASRPSDNHVV) are enriched in polar residues. The span at 216 to 236 (LPPPKPPSPPRKPPPPPPPPA) shows a compositional bias: pro residues. Threonine 269 carries the phosphothreonine modification. The region spanning 280–559 (FSEANLLGQG…VRALEGNVSL (280 aa)) is the Protein kinase domain. Residues 286-294 (LGQGGFGYV) and lysine 308 contribute to the ATP site. A Phosphotyrosine modification is found at tyrosine 353. Aspartate 404 serves as the catalytic Proton acceptor. 2 positions are modified to phosphoserine: serine 408 and serine 437. 2 positions are modified to phosphothreonine: threonine 438 and threonine 443. A Phosphotyrosine modification is found at tyrosine 451. The segment covering 605 to 616 (YGTTGEYSNPTS) has biased composition (polar residues). Positions 605-652 (YGTTGEYSNPTSDYGLYPSGSSSEGQATREMEMGKIKKTGQGYSGPSL) are disordered.

The protein belongs to the protein kinase superfamily. Ser/Thr protein kinase family. In terms of tissue distribution, mostly expressed in inflorescence bolt, flower buds and siliques, and, to a lower extent, in roots, seedlings and leaves.

It localises to the cell membrane. The enzyme catalyses L-seryl-[protein] + ATP = O-phospho-L-seryl-[protein] + ADP + H(+). It catalyses the reaction L-threonyl-[protein] + ATP = O-phospho-L-threonyl-[protein] + ADP + H(+). The sequence is that of Proline-rich receptor-like protein kinase PERK1 (PERK1) from Arabidopsis thaliana (Mouse-ear cress).